Here is a 295-residue protein sequence, read N- to C-terminus: Indole-3-glycerol phosphate synthase (295 aa).

It belongs to the TrpC family.

It catalyses the reaction 1-(2-carboxyphenylamino)-1-deoxy-D-ribulose 5-phosphate + H(+) = (1S,2R)-1-C-(indol-3-yl)glycerol 3-phosphate + CO2 + H2O. It functions in the pathway amino-acid biosynthesis; L-tryptophan biosynthesis; L-tryptophan from chorismate: step 4/5. The chain is Indole-3-glycerol phosphate synthase from Synechococcus sp. (strain CC9605).